Consider the following 419-residue polypeptide: Diaminopimelate decarboxylase (419 aa).

The residue at position 56 (lysine 56) is an N6-(pyridoxal phosphate)lysine. Residues glycine 234 and 274 to 277 (EPGR) each bind pyridoxal 5'-phosphate. Positions 277, 312, and 316 each coordinate substrate. Cysteine 343 (proton donor) is an active-site residue. Substrate contacts are provided by glutamate 344 and tyrosine 372. Tyrosine 372 is a pyridoxal 5'-phosphate binding site.

It belongs to the Orn/Lys/Arg decarboxylase class-II family. LysA subfamily. As to quaternary structure, homodimer. Pyridoxal 5'-phosphate serves as cofactor.

The catalysed reaction is meso-2,6-diaminopimelate + H(+) = L-lysine + CO2. Its pathway is amino-acid biosynthesis; L-lysine biosynthesis via DAP pathway; L-lysine from DL-2,6-diaminopimelate: step 1/1. In terms of biological role, specifically catalyzes the decarboxylation of meso-diaminopimelate (meso-DAP) to L-lysine. This Archaeoglobus fulgidus (strain ATCC 49558 / DSM 4304 / JCM 9628 / NBRC 100126 / VC-16) protein is Diaminopimelate decarboxylase.